Reading from the N-terminus, the 426-residue chain is Glutamate-1-semialdehyde 2,1-aminomutase (426 aa).

At Lys265 the chain carries N6-(pyridoxal phosphate)lysine.

Belongs to the class-III pyridoxal-phosphate-dependent aminotransferase family. HemL subfamily. As to quaternary structure, homodimer. Requires pyridoxal 5'-phosphate as cofactor.

The protein localises to the cytoplasm. It catalyses the reaction (S)-4-amino-5-oxopentanoate = 5-aminolevulinate. The protein operates within porphyrin-containing compound metabolism; protoporphyrin-IX biosynthesis; 5-aminolevulinate from L-glutamyl-tRNA(Glu): step 2/2. This Salmonella choleraesuis (strain SC-B67) protein is Glutamate-1-semialdehyde 2,1-aminomutase.